The following is a 358-amino-acid chain: Phosphoserine aminotransferase (358 aa).

Arginine 41 serves as a coordination point for L-glutamate. Residues 75-76 (AS), tryptophan 100, threonine 148, aspartate 167, and glutamine 190 contribute to the pyridoxal 5'-phosphate site. Position 191 is an N6-(pyridoxal phosphate)lysine (lysine 191). 233–234 (NT) provides a ligand contact to pyridoxal 5'-phosphate.

The protein belongs to the class-V pyridoxal-phosphate-dependent aminotransferase family. SerC subfamily. In terms of assembly, homodimer. The cofactor is pyridoxal 5'-phosphate.

Its subcellular location is the cytoplasm. The enzyme catalyses O-phospho-L-serine + 2-oxoglutarate = 3-phosphooxypyruvate + L-glutamate. It carries out the reaction 4-(phosphooxy)-L-threonine + 2-oxoglutarate = (R)-3-hydroxy-2-oxo-4-phosphooxybutanoate + L-glutamate. It participates in amino-acid biosynthesis; L-serine biosynthesis; L-serine from 3-phospho-D-glycerate: step 2/3. The protein operates within cofactor biosynthesis; pyridoxine 5'-phosphate biosynthesis; pyridoxine 5'-phosphate from D-erythrose 4-phosphate: step 3/5. Functionally, catalyzes the reversible conversion of 3-phosphohydroxypyruvate to phosphoserine and of 3-hydroxy-2-oxo-4-phosphonooxybutanoate to phosphohydroxythreonine. The polypeptide is Phosphoserine aminotransferase (Campylobacter jejuni subsp. jejuni serotype O:23/36 (strain 81-176)).